The following is a 159-amino-acid chain: Phosphopantetheine adenylyltransferase (159 aa).

Position 9 (Ser-9) interacts with substrate. ATP contacts are provided by residues 9–10 (SF) and His-17. Residues Lys-41, Leu-73, and Lys-87 each contribute to the substrate site. Residues 88-90 (GLR), Glu-98, and 122-128 (YSFLSSS) each bind ATP.

It belongs to the bacterial CoaD family. In terms of assembly, homohexamer. Requires Mg(2+) as cofactor.

It is found in the cytoplasm. It carries out the reaction (R)-4'-phosphopantetheine + ATP + H(+) = 3'-dephospho-CoA + diphosphate. It functions in the pathway cofactor biosynthesis; coenzyme A biosynthesis; CoA from (R)-pantothenate: step 4/5. Reversibly transfers an adenylyl group from ATP to 4'-phosphopantetheine, yielding dephospho-CoA (dPCoA) and pyrophosphate. This is Phosphopantetheine adenylyltransferase from Streptomyces coelicolor (strain ATCC BAA-471 / A3(2) / M145).